Here is a 258-residue protein sequence, read N- to C-terminus: MATRIDVSGLTAYYGKFKAVADVNLTIEPKNVTAFIGPSGCGKSTVLRTLNRMHEVLPGARVEGQVLLDGEDLYGPGMDPVAVRRTVGMVFQRPNPFPTMSIYENVIAGLKLNGVRKKALLDERVEESLRGANLWEEVKDRLGRPGAGLSGGQQQRLCIARAIAVEPQVLLMDEPCSALDPISTLAIEDLIAKLKSSFTIVIVTHNMQQASRVSDSTAFFSLEKTGDPGRLVEYDKTSQIFSNPKEKRTEDYISGRFG.

Residues 5–247 (IDVSGLTAYY…SQIFSNPKEK (243 aa)) form the ABC transporter domain. 37–44 (GPSGCGKS) lines the ATP pocket.

The protein belongs to the ABC transporter superfamily. Phosphate importer (TC 3.A.1.7) family. As to quaternary structure, the complex is composed of two ATP-binding proteins (PstB), two transmembrane proteins (PstC and PstA) and a solute-binding protein (PstS).

It localises to the cell membrane. It carries out the reaction phosphate(out) + ATP + H2O = ADP + 2 phosphate(in) + H(+). Functionally, part of the ABC transporter complex PstSACB involved in phosphate import. Responsible for energy coupling to the transport system. In Frankia casuarinae (strain DSM 45818 / CECT 9043 / HFP020203 / CcI3), this protein is Phosphate import ATP-binding protein PstB.